The sequence spans 436 residues: 5-methylthioadenosine/S-adenosylhomocysteine deaminase (436 aa).

2 residues coordinate Zn(2+): histidine 66 and histidine 68. Substrate is bound by residues glutamate 95, arginine 147, arginine 161, and histidine 187. Histidine 214 contributes to the Zn(2+) binding site. Residues glutamate 217 and aspartate 303 each coordinate substrate. Aspartate 303 contributes to the Zn(2+) binding site.

It belongs to the metallo-dependent hydrolases superfamily. MTA/SAH deaminase family. Zn(2+) serves as cofactor.

The enzyme catalyses S-adenosyl-L-homocysteine + H2O + H(+) = S-inosyl-L-homocysteine + NH4(+). It carries out the reaction S-methyl-5'-thioadenosine + H2O + H(+) = S-methyl-5'-thioinosine + NH4(+). Its function is as follows. Catalyzes the deamination of 5-methylthioadenosine and S-adenosyl-L-homocysteine into 5-methylthioinosine and S-inosyl-L-homocysteine, respectively. Is also able to deaminate adenosine. The polypeptide is 5-methylthioadenosine/S-adenosylhomocysteine deaminase (Symbiobacterium thermophilum (strain DSM 24528 / JCM 14929 / IAM 14863 / T)).